The primary structure comprises 496 residues: Protein RepS (496 aa).

A DNA-binding region spans residues 120–141 (SDILTTAIDLGFMPTLIIKSDK).

In terms of biological role, essential for replication. The sequence is that of Protein RepS (repS) from Streptococcus pyogenes.